The sequence spans 356 residues: Glycerol-1-phosphate dehydrogenase [NAD(P)+] (356 aa).

NAD(+) contacts are provided by residues 103-107 and 125-128; these read GRSID and TAAS. Asp130 contributes to the substrate binding site. Residue Ser134 coordinates NAD(+). Asp177 is a substrate binding site. Zn(2+) contacts are provided by Asp177 and His257. A substrate-binding site is contributed by His261. A Zn(2+)-binding site is contributed by His273.

The protein belongs to the glycerol-1-phosphate dehydrogenase family. Requires Zn(2+) as cofactor.

It localises to the cytoplasm. The enzyme catalyses sn-glycerol 1-phosphate + NAD(+) = dihydroxyacetone phosphate + NADH + H(+). The catalysed reaction is sn-glycerol 1-phosphate + NADP(+) = dihydroxyacetone phosphate + NADPH + H(+). Its pathway is membrane lipid metabolism; glycerophospholipid metabolism. Its function is as follows. Catalyzes the NAD(P)H-dependent reduction of dihydroxyacetonephosphate (DHAP or glycerone phosphate) to glycerol 1-phosphate (G1P). The G1P thus generated is used as the glycerophosphate backbone of phospholipids in the cellular membranes of Archaea. This chain is Glycerol-1-phosphate dehydrogenase [NAD(P)+], found in Methanosarcina barkeri (strain Fusaro / DSM 804).